A 239-amino-acid polypeptide reads, in one-letter code: Small ribosomal subunit protein uS2 (239 aa).

The protein belongs to the universal ribosomal protein uS2 family.

The sequence is that of Small ribosomal subunit protein uS2 from Parasynechococcus marenigrum (strain WH8102).